Consider the following 1058-residue polypeptide: Structural maintenance of chromosomes protein 6A (1058 aa).

In terms of domain architecture, Zinc-hook spans 23–1049 (ILRIRLENFM…SMVKSHEKIK (1027 aa)). An ATP-binding site is contributed by 50 to 57 (GQNGSGKS). Residues 136 to 449 (KISSRKEELR…NDLKKHQTNK (314 aa)) adopt a coiled-coil conformation. Residues 450–633 (VTAFGGDKVI…PPRPRRPTRL (184 aa)) are flexible hinge. Positions 634-927 (CASFDDQIKD…RNKDLLKREL (294 aa)) form a coiled coil.

This sequence belongs to the SMC family. SMC6 subfamily. In terms of assembly, forms a heterodimer with SMC5. The SMC5-SMC6 complex is composed of the SMC5 and SMC6 heterodimer attached via their hinge domain and from the non-SMC subunit NSE4A or NSE4B. Expressed in seedlings, rosette leaves and floral buds.

Its subcellular location is the nucleus. It localises to the chromosome. Its function is as follows. Core component of the SMC5-SMC6 complex that promotes sister chromatid alignment after DNA damage and facilitates double-stranded DNA breaks (DSBs) repair via homologous recombination between sister chromatids. This is Structural maintenance of chromosomes protein 6A (SMC6A) from Arabidopsis thaliana (Mouse-ear cress).